The following is a 148-amino-acid chain: D-aminoacyl-tRNA deacylase (148 aa).

Residues 136–137 (GP) carry the Gly-cisPro motif, important for rejection of L-amino acids motif.

It belongs to the DTD family. Homodimer.

The protein localises to the cytoplasm. It carries out the reaction glycyl-tRNA(Ala) + H2O = tRNA(Ala) + glycine + H(+). The enzyme catalyses a D-aminoacyl-tRNA + H2O = a tRNA + a D-alpha-amino acid + H(+). Its function is as follows. An aminoacyl-tRNA editing enzyme that deacylates mischarged D-aminoacyl-tRNAs. Also deacylates mischarged glycyl-tRNA(Ala), protecting cells against glycine mischarging by AlaRS. Acts via tRNA-based rather than protein-based catalysis; rejects L-amino acids rather than detecting D-amino acids in the active site. By recycling D-aminoacyl-tRNA to D-amino acids and free tRNA molecules, this enzyme counteracts the toxicity associated with the formation of D-aminoacyl-tRNA entities in vivo and helps enforce protein L-homochirality. In Kosmotoga olearia (strain ATCC BAA-1733 / DSM 21960 / TBF 19.5.1), this protein is D-aminoacyl-tRNA deacylase.